A 347-amino-acid chain; its full sequence is sn-glycerol-3-phosphate import ATP-binding protein UgpC 1 (347 aa).

An ABC transporter domain is found at 4–234; the sequence is IELIDLKKNY…PETVFVAGFI (231 aa). 36–43 contacts ATP; that stretch reads GPSGCGKS.

It belongs to the ABC transporter superfamily. sn-glycerol-3-phosphate importer (TC 3.A.1.1.3) family. In terms of assembly, the complex is composed of two ATP-binding proteins (UgpC), two transmembrane proteins (UgpA and UgpE) and a solute-binding protein (UgpB).

The protein localises to the cell inner membrane. The enzyme catalyses sn-glycerol 3-phosphate(out) + ATP + H2O = sn-glycerol 3-phosphate(in) + ADP + phosphate + H(+). Functionally, part of the ABC transporter complex UgpBAEC involved in sn-glycerol-3-phosphate (G3P) import. Responsible for energy coupling to the transport system. In Rhizobium etli (strain ATCC 51251 / DSM 11541 / JCM 21823 / NBRC 15573 / CFN 42), this protein is sn-glycerol-3-phosphate import ATP-binding protein UgpC 1.